Here is a 243-residue protein sequence, read N- to C-terminus: MFNPNNGSEFARNRARLDDTPNPYEPEVGSLPEGDRSQAGSDTVNKTGTTIVGLTTQDGVLMASDMRASLGGRVISNKNVQKVEEIQPNAALSISGSVGGAQSFIRSLRAEANLYEARRGEYMSIDALSTMASNLLRGGPFFRVVPILGGVDDDGGHVFSLDPAGSSMSDTYTAQGSGMPYALGVLEQEYSEDLTMADAEQVAAHAVKSASERDTASGNGIHITKITHDGLTTVGHKEFDALL.

The tract at residues 1 to 46 (MFNPNNGSEFARNRARLDDTPNPYEPEVGSLPEGDRSQAGSDTVNK) is disordered. Residues 1 to 48 (MFNPNNGSEFARNRARLDDTPNPYEPEVGSLPEGDRSQAGSDTVNKTG) constitute a propeptide, removed in mature form; by autocatalysis. Catalysis depends on T49, which acts as the Nucleophile.

The protein belongs to the peptidase T1B family. As to quaternary structure, the 20S proteasome core is composed of 14 alpha and 14 beta subunits that assemble into four stacked heptameric rings, resulting in a barrel-shaped structure. The two inner rings, each composed of seven catalytic beta subunits, are sandwiched by two outer rings, each composed of seven alpha subunits. The catalytic chamber with the active sites is on the inside of the barrel. Has a gated structure, the ends of the cylinder being occluded by the N-termini of the alpha-subunits. Is capped at one or both ends by the proteasome regulatory ATPase, PAN.

It is found in the cytoplasm. It catalyses the reaction Cleavage of peptide bonds with very broad specificity.. With respect to regulation, the formation of the proteasomal ATPase PAN-20S proteasome complex, via the docking of the C-termini of PAN into the intersubunit pockets in the alpha-rings, triggers opening of the gate for substrate entry. Interconversion between the open-gate and close-gate conformations leads to a dynamic regulation of the 20S proteasome proteolysis activity. Component of the proteasome core, a large protease complex with broad specificity involved in protein degradation. This chain is Proteasome subunit beta, found in Halobacterium salinarum (strain ATCC 29341 / DSM 671 / R1).